The chain runs to 123 residues: UPF0102 protein Pput_4400 (123 aa).

Belongs to the UPF0102 family.

The sequence is that of UPF0102 protein Pput_4400 from Pseudomonas putida (strain ATCC 700007 / DSM 6899 / JCM 31910 / BCRC 17059 / LMG 24140 / F1).